Consider the following 92-residue polypeptide: UPF0237 protein MA_3235 (92 aa).

An ACT domain is found at 7–81 (IITVIGSDRV…KSLGVEVKVQ (75 aa)).

The protein belongs to the UPF0237 family.

The protein is UPF0237 protein MA_3235 of Methanosarcina acetivorans (strain ATCC 35395 / DSM 2834 / JCM 12185 / C2A).